Reading from the N-terminus, the 1423-residue chain is DNA-directed RNA polymerase subunit beta' (1423 aa).

Residues Cys-71, Cys-73, Cys-86, and Cys-89 each contribute to the Zn(2+) site. Residues Asp-461, Asp-463, and Asp-465 each contribute to the Mg(2+) site. 4 residues coordinate Zn(2+): Cys-815, Cys-889, Cys-896, and Cys-899.

Belongs to the RNA polymerase beta' chain family. In terms of assembly, the RNAP catalytic core consists of 2 alpha, 1 beta, 1 beta' and 1 omega subunit. When a sigma factor is associated with the core the holoenzyme is formed, which can initiate transcription. The cofactor is Mg(2+). Requires Zn(2+) as cofactor.

It catalyses the reaction RNA(n) + a ribonucleoside 5'-triphosphate = RNA(n+1) + diphosphate. DNA-dependent RNA polymerase catalyzes the transcription of DNA into RNA using the four ribonucleoside triphosphates as substrates. This Actinobacillus pleuropneumoniae serotype 3 (strain JL03) protein is DNA-directed RNA polymerase subunit beta'.